A 143-amino-acid polypeptide reads, in one-letter code: UPF0225 protein Reut_A0143 (143 aa).

It belongs to the UPF0225 family.

This is UPF0225 protein Reut_A0143 from Cupriavidus pinatubonensis (strain JMP 134 / LMG 1197) (Cupriavidus necator (strain JMP 134)).